Consider the following 332-residue polypeptide: Glyceraldehyde-3-phosphate dehydrogenase 1 (332 aa).

Residues 11–12, aspartate 32, and arginine 77 contribute to the NAD(+) site; that span reads RI. Residues 148–150, threonine 179, 208–209, and arginine 231 contribute to the D-glyceraldehyde 3-phosphate site; these read SCT and TG. The active-site Nucleophile is the cysteine 149. Asparagine 313 is a binding site for NAD(+).

Belongs to the glyceraldehyde-3-phosphate dehydrogenase family. Homotetramer.

It localises to the cytoplasm. It carries out the reaction D-glyceraldehyde 3-phosphate + phosphate + NAD(+) = (2R)-3-phospho-glyceroyl phosphate + NADH + H(+). It participates in carbohydrate degradation; glycolysis; pyruvate from D-glyceraldehyde 3-phosphate: step 1/5. The protein is Glyceraldehyde-3-phosphate dehydrogenase 1 (Gapdh1) of Drosophila melanogaster (Fruit fly).